Here is a 408-residue protein sequence, read N- to C-terminus: UPF0761 membrane protein NMC0462 (408 aa).

6 helical membrane passes run 43-63 (LLAL…FPVF), 100-120 (LTAI…RTID), 139-159 (FLVY…GISF), 176-196 (WSGA…LWGL), 210-230 (AFVG…LFTW), and 248-268 (VPFF…GAVL).

Belongs to the UPF0761 family.

The protein localises to the cell inner membrane. The chain is UPF0761 membrane protein NMC0462 from Neisseria meningitidis serogroup C / serotype 2a (strain ATCC 700532 / DSM 15464 / FAM18).